The sequence spans 417 residues: Exodeoxyribonuclease 7 large subunit (417 aa).

This sequence belongs to the XseA family. As to quaternary structure, heterooligomer composed of large and small subunits.

Its subcellular location is the cytoplasm. It catalyses the reaction Exonucleolytic cleavage in either 5'- to 3'- or 3'- to 5'-direction to yield nucleoside 5'-phosphates.. In terms of biological role, bidirectionally degrades single-stranded DNA into large acid-insoluble oligonucleotides, which are then degraded further into small acid-soluble oligonucleotides. The chain is Exodeoxyribonuclease 7 large subunit from Lactococcus lactis subsp. cremoris (strain MG1363).